We begin with the raw amino-acid sequence, 190 residues long: Glutathione peroxidase 2 (190 aa).

Residue U40 is part of the active site. Residue U40 is a non-standard amino acid, selenocysteine.

Belongs to the glutathione peroxidase family. As to quaternary structure, homotetramer. Exclusively expressed in the stomach and small intestine.

The protein localises to the cytoplasm. The protein resides in the cytosol. The enzyme catalyses 2 glutathione + H2O2 = glutathione disulfide + 2 H2O. It carries out the reaction a hydroperoxy polyunsaturated fatty acid + 2 glutathione = a hydroxy polyunsaturated fatty acid + glutathione disulfide + H2O. The catalysed reaction is tert-butyl hydroperoxide + 2 glutathione = tert-butanol + glutathione disulfide + H2O. It catalyses the reaction cumene hydroperoxide + 2 glutathione = 2-phenylpropan-2-ol + glutathione disulfide + H2O. The enzyme catalyses (13S)-hydroperoxy-(9Z,11E)-octadecadienoate + 2 glutathione = (13S)-hydroxy-(9Z,11E)-octadecadienoate + glutathione disulfide + H2O. It carries out the reaction (5S)-hydroperoxy-(6E,8Z,11Z,14Z)-eicosatetraenoate + 2 glutathione = (5S)-hydroxy-(6E,8Z,11Z,14Z)-eicosatetraenoate + glutathione disulfide + H2O. The catalysed reaction is (12R)-hydroperoxy-(5Z,8Z,10E,14Z)-eicosatetraenoate + 2 glutathione = (12R)-hydroxy-(5Z,8Z,10E,14Z)-eicosatetraenoate + glutathione disulfide + H2O. It catalyses the reaction (15S)-hydroperoxy-(5Z,8Z,11Z,13E)-eicosatetraenoate + 2 glutathione = (15S)-hydroxy-(5Z,8Z,11Z,13E)-eicosatetraenoate + glutathione disulfide + H2O. Catalyzes the reduction of hydroperoxides in a glutathione-dependent manner thus regulating cellular redox homeostasis. Can reduce small soluble hydroperoxides such as H2O2, cumene hydroperoxide and tert-butyl hydroperoxide, as well as several fatty acid-derived hydroperoxides. Cannot reduce phosphatidycholine hydroperoxide. The protein is Glutathione peroxidase 2 (GPX2) of Macaca fuscata fuscata (Japanese macaque).